The sequence spans 99 residues: PE family protein PE13 (99 aa).

The PE domain occupies 1–93 (MSFVMAYPEM…ASSYAATEVA (93 aa)).

It belongs to the mycobacterial PE family.

The protein resides in the secreted. It is found in the cell wall. Its function is as follows. May play a pivotal role in the interaction between M.tuberculosis and host. Can enhance the survival within macrophages under stress conditions such as H(2)O(2), SDS and low pH. Increases the production of IL-6 and IL-1beta from macrophages, and decreases the secretion of suppressor of cytokine signaling 3 (SOCS-3). These changes probably involve the p38-ERK-NF-kappa-B signaling pathway. Also precipitates the macrophage death. The polypeptide is PE family protein PE13 (Mycobacterium tuberculosis (strain ATCC 25618 / H37Rv)).